The sequence spans 252 residues: Protein TRANSPARENT TESTA 16 (252 aa).

The MADS-box domain maps to methionine 1 to glutamine 61. A K-box domain is found at glutamine 86–alanine 176. The stretch at asparagine 121–arginine 174 forms a coiled coil.

As to quaternary structure, interacts with AP1/AGL7, SEP1/AGL2, SEP2/AGL4, SEP3/AGL9 and AGL3/SEP4. As to expression, expressed in buds, flowers and immature seeds, but not in roots, stems, leaves, seedlings or siliques valves. Expression in seed coat is confined to the endothelium layer.

It is found in the nucleus. Its function is as follows. Transcription factor involved in the developmental regulation of the endothelium and in the accumulation of proanthocyanidins (PAs) or condensed tannins which give the seed its brown pigmentation after oxidation. Necessary for the normal activation of the BANYULS promoter in the endothelium body. Is required, together with AGL11/STK for the maternal control of endothelium formation, which is essential for female gametophyte development and fertilization, and seed formation. Interacts genetically with AGL1/SHP1 and AGL5/SHP2 in a partially antagonistic manner and represses AGL1/SHP1, AGL5/SHP2, and AGL8/FUL during flower development. Is essential for the coordination of cell divisions in ovule, seed coat development and endosperm formation. Mediates the crosstalk between endothelium and nucellus to ensure proper seed formation. Functions redundantly with AGL63/GOA to repress nucellus growth and promote its degeneration. Represses the negative regulator of autophagy and programmed cell death HVA22D in the proximal nucellus. Binds specifically to the CArG box DNA sequence 5'-CC (A/T)6 GG-3'. The sequence is that of Protein TRANSPARENT TESTA 16 (TT16) from Arabidopsis thaliana (Mouse-ear cress).